The chain runs to 119 residues: Ribonuclease P protein component (119 aa).

Belongs to the RnpA family. Consists of a catalytic RNA component (M1 or rnpB) and a protein subunit.

It carries out the reaction Endonucleolytic cleavage of RNA, removing 5'-extranucleotides from tRNA precursor.. In terms of biological role, RNaseP catalyzes the removal of the 5'-leader sequence from pre-tRNA to produce the mature 5'-terminus. It can also cleave other RNA substrates such as 4.5S RNA. The protein component plays an auxiliary but essential role in vivo by binding to the 5'-leader sequence and broadening the substrate specificity of the ribozyme. The protein is Ribonuclease P protein component of Aeromonas salmonicida (strain A449).